The following is a 283-amino-acid chain: UPF0276 protein Nmul_A2550 (283 aa).

The protein belongs to the UPF0276 family.

This chain is UPF0276 protein Nmul_A2550, found in Nitrosospira multiformis (strain ATCC 25196 / NCIMB 11849 / C 71).